A 103-amino-acid chain; its full sequence is MESVQELIPLAKEMMAQKPRGKLVKLYVLGSVLALFGVVLGLVETVCSPFTAASRLRDQEAAVVELREACEQQSLHKQALLAGGKAQEATLCSRALSLRQHAS.

As to quaternary structure, directly interacts with BCL2; this interaction prevents the formation of the anti-apoptotic BAX-BCL2 complex.

Its subcellular location is the mitochondrion. In terms of biological role, promotes apoptosis by binding to BCL2, hence preventing the formation of protective BCL2-BAX heterodimers. This is G0/G1 switch protein 2 (G0s2) from Mus musculus (Mouse).